A 275-amino-acid polypeptide reads, in one-letter code: Lincomycin biosynthesis protein LmbN (275 aa).

The Carrier domain maps to 1 to 78; that stretch reads MSTLDEVLAL…AIAATVARIT (78 aa). S37 is subject to O-(pantetheine 4'-phosphoryl)serine. The SIS domain maps to 113 to 275; that stretch reads LFDTWHAGGT…HHALCVAHAP (163 aa).

It functions in the pathway antibiotic biosynthesis; lincomycin biosynthesis. This chain is Lincomycin biosynthesis protein LmbN (lmbN), found in Streptomyces lincolnensis.